The primary structure comprises 353 residues: 3-isopropylmalate dehydrogenase (353 aa).

Residues Arg97, Arg107, Arg135, and Asp219 each contribute to the substrate site. Mg(2+) contacts are provided by Asp219, Asp243, and Asp247.

The protein belongs to the isocitrate and isopropylmalate dehydrogenases family. LeuB type 1 subfamily. In terms of assembly, homodimer. Mg(2+) serves as cofactor. The cofactor is Mn(2+).

Its subcellular location is the cytoplasm. It carries out the reaction (2R,3S)-3-isopropylmalate + NAD(+) = 4-methyl-2-oxopentanoate + CO2 + NADH. It participates in amino-acid biosynthesis; L-leucine biosynthesis; L-leucine from 3-methyl-2-oxobutanoate: step 3/4. Functionally, catalyzes the oxidation of 3-carboxy-2-hydroxy-4-methylpentanoate (3-isopropylmalate) to 3-carboxy-4-methyl-2-oxopentanoate. The product decarboxylates to 4-methyl-2 oxopentanoate. The chain is 3-isopropylmalate dehydrogenase from Bacteroides fragilis (strain ATCC 25285 / DSM 2151 / CCUG 4856 / JCM 11019 / LMG 10263 / NCTC 9343 / Onslow / VPI 2553 / EN-2).